The primary structure comprises 152 residues: Putative aryl-alcohol dehydrogenase YFL057C (152 aa).

It belongs to the aldo/keto reductase family. Aldo/keto reductase 2 subfamily.

In terms of biological role, putative aryl-alcohol dehydrogenase. In Saccharomyces cerevisiae (strain ATCC 204508 / S288c) (Baker's yeast), this protein is Putative aryl-alcohol dehydrogenase YFL057C.